The sequence spans 226 residues: Cytidylate kinase (226 aa).

Glycine 10–threonine 18 provides a ligand contact to ATP.

It belongs to the cytidylate kinase family. Type 1 subfamily.

Its subcellular location is the cytoplasm. It carries out the reaction CMP + ATP = CDP + ADP. The catalysed reaction is dCMP + ATP = dCDP + ADP. The polypeptide is Cytidylate kinase (Streptococcus pyogenes serotype M18 (strain MGAS8232)).